The primary structure comprises 527 residues: Neutrophil cytosol factor 2 (527 aa).

TPR repeat units follow at residues 37 to 70 (SRICFNVGCIYTILGNLPEAEKAFTKSINRDKHL), 71 to 104 (AVSYFQRGMLYYQMEKYDSAIKDLKEALTQLRGN), and 121 to 154 (CEVLYNIAFMYAKREEWKKAEEHLALAVSMKSEP). The residue at position 233 (Thr-233) is a Phosphothreonine. Residues 240–299 (LEGEAHRVLFGFVPETPEELQVMPGNIVFVLKKGNDNWATVMFNGQKGLVPCNYLEPVEL) enclose the SH3 1 domain. A disordered region spans residues 304-345 (QQQPQEETSLESDIPAPPSSSAPGRPQLSPGQKGKEEPKQEI). At Ser-324 the chain carries Phosphoserine. Positions 336-345 (KGKEEPKQEI) are enriched in basic and acidic residues. The region spanning 352–430 (SYTLKVHYKY…YCLTLWCENT (79 aa)) is the PB1 domain. Ser-400 bears the Phosphoserine mark. The interval 434–457 (QGFPDEPEESKKSDANNQTTEPEL) is disordered. In terms of domain architecture, SH3 2 spans 458–517 (KEGSKVVALFSYEATQPEDLEFLEGDVILVISTVNEQWLEGECKGKVGIFPKAFVEQHPT).

Belongs to the NCF2/NOXA1 family. As to quaternary structure, component of the phagocyte NADPH oxidase complex composed of an obligatory core heterodimer formed by the membrane proteins CYBA and CYBB and the cytosolic regulatory subunits NCF1/p47-phox, NCF2/p67-phox, NCF4/p40-phox and the small GTPase RAC1 or RAC2. Part of a cytosolic complex composed at least by NCF1, NCF2 and NCF4. Interacts with NCF4. Interacts (via the C-terminal SH3 domain) with NCF1 (via C-terminus). Interacts with SYTL1 and RAC1. May interact with NOXO1. Interacts with S100A8 and calprotectin (S100A8/9). Interacts with GBP7 (via GB1/RHD3-type G domain). Interacts with CYBB; the interaction is enhanced in the presence of GBP7.

The protein resides in the cytoplasm. In terms of biological role, subunit of the phagocyte NADPH oxidase complex that mediates the transfer of electrons from cytosolic NADPH to O2 to produce the superoxide anion (O2(-)). In the activated complex, electrons are first transferred from NADPH to flavin adenine dinucleotide (FAD) and subsequently transferred via two heme molecules to molecular oxygen, producing superoxide through an outer-sphere reaction. Activation of the NADPH oxidase complex is initiated by the assembly of cytosolic subunits of the NADPH oxidase complex with the core NADPH oxidase complex to form a complex at the plasma membrane or phagosomal membrane. This activation process is initiated by phosphorylation dependent binding of the cytosolic NCF1/p47-phox subunit to the C-terminus of CYBA/p22-phox. The sequence is that of Neutrophil cytosol factor 2 from Bos taurus (Bovine).